A 38-amino-acid chain; its full sequence is Large ribosomal subunit protein bL36 (38 aa).

The protein belongs to the bacterial ribosomal protein bL36 family.

The sequence is that of Large ribosomal subunit protein bL36 from Gemmatimonas aurantiaca (strain DSM 14586 / JCM 11422 / NBRC 100505 / T-27).